The chain runs to 441 residues: GTPase Der (441 aa).

2 EngA-type G domains span residues 3-167 (PLIA…PKGS) and 176-351 (TKIA…EQFA). Residues 9-16 (GRPNVGKS), 56-60 (DTGGF), 119-122 (NKID), 182-189 (GRPNVGKS), 229-233 (DTAGI), and 294-297 (NKWD) each bind GTP. One can recognise a KH-like domain in the interval 352–436 (RRITTSDLNR…PMRLLFKGRE (85 aa)).

This sequence belongs to the TRAFAC class TrmE-Era-EngA-EngB-Septin-like GTPase superfamily. EngA (Der) GTPase family. As to quaternary structure, associates with the 50S ribosomal subunit.

GTPase that plays an essential role in the late steps of ribosome biogenesis. In Geotalea uraniireducens (strain Rf4) (Geobacter uraniireducens), this protein is GTPase Der.